The primary structure comprises 292 residues: Sulfofructosephosphate aldolase (292 aa).

Lys-193 (schiff-base intermediate with substrate) is an active-site residue.

It belongs to the aldolase LacD family. Homotetramer.

It carries out the reaction 6-deoxy-6-sulfo-D-fructose 1-phosphate = (2S)-3-sulfolactaldehyde + dihydroxyacetone phosphate. Functionally, cleaves 6-deoxy-6-sulfo-D-fructose 1-phosphate (SFP) to form dihydroxyacetone phosphate (DHAP) and 3-sulfolactaldehyde (SLA). In Escherichia coli (strain K12), this protein is Sulfofructosephosphate aldolase (yihT).